A 357-amino-acid chain; its full sequence is Ribosomal RNA large subunit methyltransferase M (357 aa).

S-adenosyl-L-methionine is bound by residues S183, 216–219 (APGG), D235, D255, and D271. K300 acts as the Proton acceptor in catalysis.

It belongs to the class I-like SAM-binding methyltransferase superfamily. RNA methyltransferase RlmE family. RlmM subfamily. Monomer.

The protein resides in the cytoplasm. It carries out the reaction cytidine(2498) in 23S rRNA + S-adenosyl-L-methionine = 2'-O-methylcytidine(2498) in 23S rRNA + S-adenosyl-L-homocysteine + H(+). In terms of biological role, catalyzes the 2'-O-methylation at nucleotide C2498 in 23S rRNA. In Pseudomonas fluorescens (strain Pf0-1), this protein is Ribosomal RNA large subunit methyltransferase M.